The primary structure comprises 182 residues: UPF0301 protein NMB1336 (182 aa).

The protein belongs to the UPF0301 (AlgH) family.

This is UPF0301 protein NMB1336 from Neisseria meningitidis serogroup B (strain ATCC BAA-335 / MC58).